A 576-amino-acid chain; its full sequence is MEVPLQKSAPGSALSPARVLGGIQRPRHLSVFEFESDGFLGSPEPTASSSPVTTLTQTMHNLAGLGSEPPKAQVGSLSFQNRLADLSLSRRTSECSLSSESSESSDAGLCMDSPSPVDPQMAERTFEQAIQAASRVIQNEQFTIKRFRSLPVRLLEHSPVLQSITNSRALDSWRKTEAGYRAAANSPGEDKENDGYIFKMPQELPHSSSAQALAEWVSRRQAFTQRPSSAPDLMCLTTEWKMEVEELSPVAQSSSLTPVERASEEDDGFVDILESDLKDDEKVPAGMENLISAPLVKKLDKEEEQDLIMFSKCQRLFRSPSMPCSVIRPILKRLERPQDRDVPVQSKRRKSVTPLEEQQLEEPKARVFRSKSLCHEIENILDSDHRGLIGDYSKAFLLQTVDGKHQDLKYISPETMVALLTGKFSNIVEKFVIVDCRYPYEYEGGHIKNAVNLPLERDAETFLLQRPIMPCSLDKRIILIFHCEFSSERGPRMCRFIRERDRAANDYPSLYYPEMYILKGGYKEFFPQHPNFCEPQDYRPMNHEAFRDELRNFRLKTRSWAGERSRRELCSRLQDQ.

Ser42 carries the post-translational modification Phosphoserine. Positions 90 to 105 are enriched in low complexity; the sequence is RRTSECSLSSESSESS. The tract at residues 90 to 119 is disordered; sequence RRTSECSLSSESSESSDAGLCMDSPSPVDP. A Phosphoserine; by MELK modification is found at Ser167. The residue at position 248 (Ser248) is a Phosphoserine. Ser321 bears the Phosphoserine; by MELK and MAPK14 mark. A disordered region spans residues 338 to 358; the sequence is QDRDVPVQSKRRKSVTPLEEQ. A Phosphoserine; by AURKA modification is found at Ser351. Position 372 is a phosphoserine; by BRSK1 and MAPK14 (Ser372). A Rhodanese domain is found at 427-534; sequence IVEKFVIVDC…FFPQHPNFCE (108 aa). Cys483 is an active-site residue. Ser559 is subject to Phosphoserine.

It belongs to the MPI phosphatase family. Interacts with MAPK14 and 14-3-3 proteins. In terms of processing, phosphorylated by BRSK1 in vitro. Phosphorylated by CHEK1, which inhibits the activity of this protein. Phosphorylation at Ser-351 by AURKA might locally participate in the control of the onset of mitosis. Phosphorylation by MELK at Ser-167 promotes localization to the centrosome and the spindle poles during mitosis. Phosphorylation at Ser-321 and Ser-372 by MAPK14 is required for binding to 14-3-3 proteins. Expressed predominantly in spleen, lung, heart, brain, intestine, and muscle.

It localises to the cytoplasm. Its subcellular location is the cytoskeleton. The protein resides in the microtubule organizing center. It is found in the centrosome. The protein localises to the spindle pole. The enzyme catalyses O-phospho-L-tyrosyl-[protein] + H2O = L-tyrosyl-[protein] + phosphate. With respect to regulation, stimulated by B-type cyclins. Functionally, tyrosine protein phosphatase which functions as a dosage-dependent inducer of mitotic progression. Directly dephosphorylates CDK1 and stimulates its kinase activity. Required for G2/M phases of the cell cycle progression and abscission during cytokinesis in a ECT2-dependent manner. The three isoforms seem to have a different level of activity. This chain is M-phase inducer phosphatase 2 (Cdc25b), found in Mus musculus (Mouse).